A 345-amino-acid polypeptide reads, in one-letter code: Anthranilate phosphoribosyltransferase (345 aa).

Residues Gly-80, 83-84, Thr-88, 90-93, 108-116, and Ser-120 each bind 5-phospho-alpha-D-ribose 1-diphosphate; these read GD, NIST, and KHGNRSVSS. Anthranilate is bound at residue Gly-80. Ser-92 contributes to the Mg(2+) binding site. Residue Asn-111 coordinates anthranilate. Arg-166 lines the anthranilate pocket. Asp-225 and Glu-226 together coordinate Mg(2+).

It belongs to the anthranilate phosphoribosyltransferase family. In terms of assembly, homodimer. Mg(2+) serves as cofactor.

It catalyses the reaction N-(5-phospho-beta-D-ribosyl)anthranilate + diphosphate = 5-phospho-alpha-D-ribose 1-diphosphate + anthranilate. It participates in amino-acid biosynthesis; L-tryptophan biosynthesis; L-tryptophan from chorismate: step 2/5. Functionally, catalyzes the transfer of the phosphoribosyl group of 5-phosphorylribose-1-pyrophosphate (PRPP) to anthranilate to yield N-(5'-phosphoribosyl)-anthranilate (PRA). The protein is Anthranilate phosphoribosyltransferase of Acetivibrio thermocellus (strain ATCC 27405 / DSM 1237 / JCM 9322 / NBRC 103400 / NCIMB 10682 / NRRL B-4536 / VPI 7372) (Clostridium thermocellum).